We begin with the raw amino-acid sequence, 352 residues long: Protein Wnt-11 (352 aa).

The N-terminal stretch at 1-22 (MKIYFLLGTFLTFLLHTRICQG) is a signal peptide. N-linked (GlcNAc...) asparagine glycosylation is found at Asn38 and Asn88. Disulfide bonds link Cys78–Cys89, Cys128–Cys136, Cys138–Cys155, Cys207–Cys221, and Cys209–Cys216. Ser213 carries the O-palmitoleoyl serine; by PORCN lipid modification. A sulfotyrosine mark is found at Tyr273 and Tyr280. Disulfide bonds link Cys281–Cys312, Cys297–Cys307, Cys311–Cys351, Cys327–Cys342, Cys329–Cys339, and Cys334–Cys335. Asn298 carries N-linked (GlcNAc...) asparagine glycosylation.

Belongs to the Wnt family. Glycosylation is required for protein secretion. In terms of processing, palmitoleoylation is required for efficient binding to frizzled receptors. Depalmitoleoylation leads to Wnt signaling pathway inhibition. As to expression, in embryos, expressed in the neural tube, dorsal somite, mesenchymal cells within the dorsal fin, branchial arches and heart muscle, becoming expressed throughout the myocardium by the tadpole stage (stage 45). Prior to neural crest cell migration, expressed in a domain flanking the neural crest on the medial or neural (the opposite side to wnt11b). Weakly expressed in the developing pronephros from stage 25, with expression increasing from stages 30 to 35.

The protein resides in the secreted. Its subcellular location is the extracellular space. It is found in the extracellular matrix. Its function is as follows. Ligand for members of the frizzled family of seven transmembrane receptors. Shares much functionality with wnt11b. Signals through a non-canonical Wnt pathway to activate Jun-N-terminal kinase (JNK) to regulate gastrulation movements. Acts in a non-cell-autonomous manner to control neural crest migration, probably acting as an extracellular signal from surrounding tissue, but is not required for neural crest induction. Acts redundantly with wnt11b during pronephros induction. Regulates cardiac morphogenesis through the activation of JNK, but is not required for cardiac differentiation. Essential for dorsal fin development; required for an epithelial to mesenchymal transformation event prior to migration of cells into the fin, and ultimately for maintenance of fin structure. Mediates dorsal fin development through a non-canonical pathway mediated by Ca(2+). This is Protein Wnt-11 from Xenopus laevis (African clawed frog).